A 356-amino-acid chain; its full sequence is DNA integrity scanning protein DisA (356 aa).

Residues 7–147 (NKNMLYALKM…EKYVVEDISK (141 aa)) enclose the DAC domain. Residues G74, L92, and 105–109 (TRHRT) contribute to the ATP site.

This sequence belongs to the DisA family. As to quaternary structure, homooctamer. It depends on Mg(2+) as a cofactor.

The enzyme catalyses 2 ATP = 3',3'-c-di-AMP + 2 diphosphate. Participates in a DNA-damage check-point that is active prior to asymmetric division when DNA is damaged. DisA forms globular foci that rapidly scan along the chromosomes during sporulation, searching for lesions. When a lesion is present, DisA pauses at the lesion site. This triggers a cellular response that culminates in a temporary block in sporulation initiation. Its function is as follows. Also has diadenylate cyclase activity, catalyzing the condensation of 2 ATP molecules into cyclic di-AMP (c-di-AMP). c-di-AMP acts as a signaling molecule that couples DNA integrity with progression of sporulation. The rise in c-di-AMP level generated by DisA while scanning the chromosome, operates as a positive signal that advances sporulation; upon encountering a lesion, the DisA focus arrests at the damaged site and halts c-di-AMP synthesis. The chain is DNA integrity scanning protein DisA from Clostridioides difficile (strain 630) (Peptoclostridium difficile).